We begin with the raw amino-acid sequence, 154 residues long: SsrA-binding protein (154 aa).

The tract at residues 134–154 is disordered; sequence KRQAIKERQTQREIQRELKER.

The protein belongs to the SmpB family.

The protein localises to the cytoplasm. Required for rescue of stalled ribosomes mediated by trans-translation. Binds to transfer-messenger RNA (tmRNA), required for stable association of tmRNA with ribosomes. tmRNA and SmpB together mimic tRNA shape, replacing the anticodon stem-loop with SmpB. tmRNA is encoded by the ssrA gene; the 2 termini fold to resemble tRNA(Ala) and it encodes a 'tag peptide', a short internal open reading frame. During trans-translation Ala-aminoacylated tmRNA acts like a tRNA, entering the A-site of stalled ribosomes, displacing the stalled mRNA. The ribosome then switches to translate the ORF on the tmRNA; the nascent peptide is terminated with the 'tag peptide' encoded by the tmRNA and targeted for degradation. The ribosome is freed to recommence translation, which seems to be the essential function of trans-translation. This chain is SsrA-binding protein, found in Synechococcus sp. (strain JA-2-3B'a(2-13)) (Cyanobacteria bacterium Yellowstone B-Prime).